A 148-amino-acid chain; its full sequence is Deoxyuridine 5'-triphosphate nucleotidohydrolase (148 aa).

Substrate contacts are provided by residues 67 to 69, Asn-80, 84 to 86, and Met-94; these read RSG and LID.

The protein belongs to the dUTPase family. Requires Mg(2+) as cofactor.

The enzyme catalyses dUTP + H2O = dUMP + diphosphate + H(+). It participates in pyrimidine metabolism; dUMP biosynthesis; dUMP from dCTP (dUTP route): step 2/2. In terms of biological role, this enzyme is involved in nucleotide metabolism: it produces dUMP, the immediate precursor of thymidine nucleotides and it decreases the intracellular concentration of dUTP so that uracil cannot be incorporated into DNA. This is Deoxyuridine 5'-triphosphate nucleotidohydrolase from Francisella philomiragia subsp. philomiragia (strain ATCC 25017 / CCUG 19701 / FSC 153 / O#319-036).